Reading from the N-terminus, the 184-residue chain is ATP synthase subunit b, chloroplastic (184 aa).

Residues 27 to 49 (LATNLINLSVVFGVLIFFGKGVL) form a helical membrane-spanning segment.

The protein belongs to the ATPase B chain family. As to quaternary structure, F-type ATPases have 2 components, F(1) - the catalytic core - and F(0) - the membrane proton channel. F(1) has five subunits: alpha(3), beta(3), gamma(1), delta(1), epsilon(1). F(0) has four main subunits: a(1), b(1), b'(1) and c(10-14). The alpha and beta chains form an alternating ring which encloses part of the gamma chain. F(1) is attached to F(0) by a central stalk formed by the gamma and epsilon chains, while a peripheral stalk is formed by the delta, b and b' chains.

It localises to the plastid. Its subcellular location is the chloroplast thylakoid membrane. F(1)F(0) ATP synthase produces ATP from ADP in the presence of a proton or sodium gradient. F-type ATPases consist of two structural domains, F(1) containing the extramembraneous catalytic core and F(0) containing the membrane proton channel, linked together by a central stalk and a peripheral stalk. During catalysis, ATP synthesis in the catalytic domain of F(1) is coupled via a rotary mechanism of the central stalk subunits to proton translocation. Its function is as follows. Component of the F(0) channel, it forms part of the peripheral stalk, linking F(1) to F(0). This Aethionema cordifolium (Lebanon stonecress) protein is ATP synthase subunit b, chloroplastic.